Here is a 478-residue protein sequence, read N- to C-terminus: Sorting nexin-4 (478 aa).

Residues 1–10 show a composition bias toward basic and acidic residues; that stretch reads MAVIDQHQDD. The interval 1-56 is disordered; it reads MAVIDQHQDDFSNVSWNTDEHTAAESSSSVTATEFDDTERNGHNAYESDAPGSDGQ. Residues 24–33 are compositionally biased toward low complexity; that stretch reads AESSSSVTAT. Residues 58–180 enclose the PX domain; the sequence is VLDCVVSEPL…IFLESPDWNA (123 aa). Residues arginine 101, threonine 103, lysine 127, and arginine 146 each contribute to the a 1,2-diacyl-sn-glycero-3-phospho-(1D-myo-inositol-3-phosphate) site. The segment at 459–478 is disordered; it reads EGVSGTRSTGVEPPGRRLAD.

This sequence belongs to the sorting nexin family. Interacts with the mitochondrial prohibitin complex subunits PHB1 and PHB2; the interaction is direct and plays a role in mitophagy.

It is found in the cytoplasm. It localises to the cytosol. The protein resides in the preautophagosomal structure membrane. Its subcellular location is the endosome membrane. The protein localises to the mitochondrion membrane. It is found in the lipid droplet. Sorting nexin, involved in the separation or division of vacuoles throughout the entire life cycle of the cells. Involved in retrieval of late-Golgi SNAREs from post-Golgi endosomes to the trans-Golgi network, for cytoplasm to vacuole transport (Cvt), and autophagy of large cargos including mitophagy, pexophagy and glycophagy. Required for the switch to necrotrophic growth. The protein is Sorting nexin-4 of Colletotrichum higginsianum (strain IMI 349063) (Crucifer anthracnose fungus).